The following is a 376-amino-acid chain: Ribosomal RNA large subunit methyltransferase G (376 aa).

It belongs to the methyltransferase superfamily. RlmG family.

It is found in the cytoplasm. The enzyme catalyses guanosine(1835) in 23S rRNA + S-adenosyl-L-methionine = N(2)-methylguanosine(1835) in 23S rRNA + S-adenosyl-L-homocysteine + H(+). Specifically methylates the guanine in position 1835 (m2G1835) of 23S rRNA. In Klebsiella pneumoniae subsp. pneumoniae (strain ATCC 700721 / MGH 78578), this protein is Ribosomal RNA large subunit methyltransferase G.